Reading from the N-terminus, the 115-residue chain is Holo-[acyl-carrier-protein] synthase (115 aa).

2 residues coordinate Mg(2+): Asp-6 and Glu-51.

The protein belongs to the P-Pant transferase superfamily. AcpS family. It depends on Mg(2+) as a cofactor.

The protein resides in the cytoplasm. The catalysed reaction is apo-[ACP] + CoA = holo-[ACP] + adenosine 3',5'-bisphosphate + H(+). Functionally, transfers the 4'-phosphopantetheine moiety from coenzyme A to a Ser of acyl-carrier-protein. In Campylobacter jejuni subsp. jejuni serotype O:6 (strain 81116 / NCTC 11828), this protein is Holo-[acyl-carrier-protein] synthase.